The chain runs to 586 residues: Beta-fructofuranosidase, insoluble isoenzyme 3 (586 aa).

The signal sequence occupies residues 1-26; it reads MATARARAALVFVALLQMAAVVVVRA. Asp61 is an active-site residue. N-linked (GlcNAc...) asparagine glycans are attached at residues Asn154, Asn179, Asn341, Asn390, and Asn479.

This sequence belongs to the glycosyl hydrolase 32 family.

It localises to the secreted. The protein resides in the extracellular space. It is found in the apoplast. Its subcellular location is the cell wall. The catalysed reaction is Hydrolysis of terminal non-reducing beta-D-fructofuranoside residues in beta-D-fructofuranosides.. In Oryza sativa subsp. indica (Rice), this protein is Beta-fructofuranosidase, insoluble isoenzyme 3 (CIN3).